A 488-amino-acid polypeptide reads, in one-letter code: Receptor-like tyrosine-protein kinase kin-15 (488 aa).

The first 26 residues, 1–26 (MCLKMRYERIKYILLFSLMHLVYSNS), serve as a signal peptide directing secretion. N-linked (GlcNAc...) asparagine glycosylation is present at N25. Over 27 to 50 (TFESFTENPHISSQISNVLYMDQM) the chain is Extracellular. Residues 51 to 70 (FIIYILICILLILISVIVYL) form a helical membrane-spanning segment. Over 71 to 488 (SKRYSQQMMQ…SKLEDWIRRD (418 aa)) the chain is Cytoplasmic. The 315-residue stretch at 144-458 (EISEDKLGSG…VEFFEEHLSV (315 aa)) folds into the Protein kinase domain. ATP is bound by residues 150 to 158 (LGSGFFGEV) and K183. The active-site Proton acceptor is D319.

The protein belongs to the protein kinase superfamily. Tyr protein kinase family. Hypodermal cells.

Its subcellular location is the cell membrane. The catalysed reaction is L-tyrosyl-[protein] + ATP = O-phospho-L-tyrosyl-[protein] + ADP + H(+). Functionally, may be specifically involved in cell-cell interactions regulating cell fusions that generate the hypodermis during postembryonic development. It has a role in the development of the HYP7 hypodermal syncytium. The protein is Receptor-like tyrosine-protein kinase kin-15 (kin-15) of Caenorhabditis elegans.